The primary structure comprises 431 residues: Homogentisate 1,2-dioxygenase (431 aa).

Histidine 286 functions as the Proton acceptor in the catalytic mechanism. Histidine 329 and glutamate 335 together coordinate Fe cation. Homogentisate contacts are provided by tyrosine 344 and histidine 365. A Fe cation-binding site is contributed by histidine 365.

Belongs to the homogentisate dioxygenase family. Hexamer; dimer of trimers. It depends on Fe cation as a cofactor.

The catalysed reaction is homogentisate + O2 = 4-maleylacetoacetate + H(+). The protein operates within amino-acid degradation; L-phenylalanine degradation; acetoacetate and fumarate from L-phenylalanine: step 4/6. Its function is as follows. Involved in the catabolism of homogentisate (2,5-dihydroxyphenylacetate or 2,5-OH-PhAc), a central intermediate in the degradation of phenylalanine and tyrosine. Catalyzes the oxidative ring cleavage of the aromatic ring of homogentisate to yield maleylacetoacetate. This is Homogentisate 1,2-dioxygenase from Pseudomonas fluorescens (strain Pf0-1).